Consider the following 44-residue polypeptide: Protein PsbN (44 aa).

Residues 6–26 (FFFTIFLWCLLLSITGYSIYV) traverse the membrane as a helical segment.

This sequence belongs to the PsbN family.

The protein localises to the plastid. Its subcellular location is the chloroplast thylakoid membrane. Functionally, may play a role in photosystem I and II biogenesis. This Chlorella vulgaris (Green alga) protein is Protein PsbN.